Consider the following 97-residue polypeptide: Co-chaperonin GroES (97 aa).

Belongs to the GroES chaperonin family. In terms of assembly, heptamer of 7 subunits arranged in a ring. Interacts with the chaperonin GroEL.

The protein resides in the cytoplasm. Its function is as follows. Together with the chaperonin GroEL, plays an essential role in assisting protein folding. The GroEL-GroES system forms a nano-cage that allows encapsulation of the non-native substrate proteins and provides a physical environment optimized to promote and accelerate protein folding. GroES binds to the apical surface of the GroEL ring, thereby capping the opening of the GroEL channel. This is Co-chaperonin GroES from Burkholderia vietnamiensis.